We begin with the raw amino-acid sequence, 43 residues long: Peroxidase (43 aa).

It belongs to the peroxidase family. Classical plant (class III) peroxidase subfamily. Ca(2+) is required as a cofactor. The cofactor is heme b.

It catalyses the reaction 2 a phenolic donor + H2O2 = 2 a phenolic radical donor + 2 H2O. In terms of biological role, removal of H(2)O(2), oxidation of toxic reductants, biosynthesis and degradation of lignin, suberization, auxin catabolism, response to environmental stresses such as wounding, pathogen attack and oxidative stress. These functions might be dependent on each isozyme/isoform in each plant tissue. The sequence is that of Peroxidase from Cynara cardunculus var. scolymus (Globe artichoke).